Here is a 48-residue protein sequence, read N- to C-terminus: uncharacterized protein (48 aa).

The protein belongs to the ELIP/psbS family.

It localises to the plastid. The protein resides in the chloroplast. Its function is as follows. Possible role in chlorophyll and/or carotenoid binding. This is an uncharacterized protein from Porphyra purpurea (Red seaweed).